Here is a 279-residue protein sequence, read N- to C-terminus: MMPEYVRKKLTLDFGQVTDYIVRRIREYIEESKKEGGIIGLSGGIDSSVTTILLSRATNNFYILLMPTSSTPQKDIEDAMKIIKIVNGENKYSYINIDEIINEFSSIVNISDKIVIGNIKARVRMTLLYAFAQKMNYLVIGTGDKSEIMLGYFTKYGDGGVDVLPIGDLYKTQVRMLGNYLGVPEEIVKKPPSPALWEGQTAEGEIGLDYETIDSILYLKFEEMREPEEIAEMTKTSYDKVIKIINMVKTSQHKRLPPEIFRLSGRAINSDWRYPRQWG.

ATP is bound at residue 40-47 (GLSGGIDS). D46 contributes to the Mg(2+) binding site. R122 contacts deamido-NAD(+). An ATP-binding site is contributed by T142. E147 provides a ligand contact to Mg(2+). K155 and D162 together coordinate deamido-NAD(+). ATP-binding residues include K171 and S193. 253 to 254 (HK) contacts deamido-NAD(+).

The protein belongs to the NAD synthetase family. In terms of assembly, homodimer.

It carries out the reaction deamido-NAD(+) + NH4(+) + ATP = AMP + diphosphate + NAD(+) + H(+). Its pathway is cofactor biosynthesis; NAD(+) biosynthesis; NAD(+) from deamido-NAD(+) (ammonia route): step 1/1. Catalyzes the ATP-dependent amidation of deamido-NAD to form NAD. Uses ammonia as a nitrogen source. The protein is NH(3)-dependent NAD(+) synthetase of Sulfurisphaera tokodaii (strain DSM 16993 / JCM 10545 / NBRC 100140 / 7) (Sulfolobus tokodaii).